A 128-amino-acid polypeptide reads, in one-letter code: Diacylglycerol kinase (128 aa).

Glutamate 34 is an a divalent metal cation binding site. 2 consecutive transmembrane segments (helical) span residues 35–55 (SAFR…SYLT) and 58–78 (FLEW…ELIN). Catalysis depends on glutamate 75, which acts as the Proton acceptor. Glutamate 82 contacts a divalent metal cation. Residues 108-128 (LIGLIFWAFIWGRYLLTLYFN) form a helical membrane-spanning segment.

The protein belongs to the bacterial diacylglycerol kinase family. Mg(2+) serves as cofactor.

Its subcellular location is the cell inner membrane. It carries out the reaction a 1,2-diacyl-sn-glycerol + ATP = a 1,2-diacyl-sn-glycero-3-phosphate + ADP + H(+). In terms of biological role, catalyzes the ATP-dependent phosphorylation of sn-l,2-diacylglycerol (DAG) to phosphatidic acid. Involved in the recycling of diacylglycerol produced as a by-product during membrane-derived oligosaccharide (MDO) biosynthesis. The chain is Diacylglycerol kinase (dgkA) from Helicobacter pylori (strain J99 / ATCC 700824) (Campylobacter pylori J99).